The chain runs to 702 residues: Soluble guanylate cyclase gcy-31 (702 aa).

Histidine 104 is a heme binding site. A coiled-coil region spans residues 368 to 406 (TQQSAELKLLLHQEAQKSRNMRENMNRLKKERRRTDKLL). Residues 435–564 (TILFTDIVEF…ETVYVANKME (130 aa)) form the Guanylate cyclase domain. 2 residues coordinate Mg(2+): aspartate 440 and aspartate 484. The tract at residues 614–702 (RHGPHRVPSP…QDLTPRKSIT (89 aa)) is disordered. A compositionally biased stretch (acidic residues) spans 633-643 (SQTEDDDDDEL). The segment covering 683–695 (RNSNKTPRQSQDL) has biased composition (polar residues).

This sequence belongs to the adenylyl cyclase class-4/guanylyl cyclase family. In terms of assembly, heterodimer; with other soluble guanylate cyclases. It depends on heme as a cofactor. As to expression, expressed in a pair of bilaterally symmetric neurons in the head.

Its subcellular location is the cytoplasm. It catalyses the reaction GTP = 3',5'-cyclic GMP + diphosphate. Its activity is regulated as follows. May be regulated by molecular oxygen. Probably not activated by nitric oxide (NO). In terms of biological role, synthesizes cyclic GMP (cGMP) from GTP. May play a role in embryogenesis. In Caenorhabditis elegans, this protein is Soluble guanylate cyclase gcy-31 (gcy-31).